The following is a 72-amino-acid chain: Osmotically-inducible lipoprotein B (72 aa).

A signal peptide spans 1-23; it reads MFMTSKKMAAAVLAITVAMSLSA. Residue Cys24 is the site of N-palmitoyl cysteine attachment. Residue Cys24 is the site of S-diacylglycerol cysteine attachment.

The protein resides in the cell membrane. Functionally, provides resistance to osmotic stress. May be important for stationary-phase survival. This Salmonella typhimurium (strain LT2 / SGSC1412 / ATCC 700720) protein is Osmotically-inducible lipoprotein B (osmB).